A 773-amino-acid chain; its full sequence is FT-interacting protein 3 (773 aa).

Positions M1–P16 are enriched in basic and acidic residues. A disordered region spans residues M1–S24. C2 domains lie at K22 to Y142, V181 to Y305, and Y345 to Y471. D55, D61, D108, D110, and D115 together coordinate Ca(2+). The next 3 helical transmembrane spans lie at I574 to W594, I608 to I628, and L716 to V736.

This sequence belongs to the MCTP family. Interacts with and regulates subcellular localization and trafficking of STM. Requires Ca(2+) as cofactor. Accumulates in vascular tissues, leaf primordia and flowers. Highly expressed in roots meristems and in both vegetative and inflorescence shoot apical meristems (SAMs).

It is found in the endoplasmic reticulum membrane. It localises to the cytoplasm. The protein resides in the vesicle. Its subcellular location is the cell membrane. The protein localises to the endosome membrane. It is found in the golgi apparatus membrane. Its function is as follows. Required for proliferation and differentiation of shoot stem cells in the shoot apical meristem (SAM), thus determining the appropriate balance between the maintenance of shoot stem cells and their differentiation into other aboveground plant parts via the control of subcellular localization and intercellular trafficking of STM in the shoot apex. Prevents intracellular trafficking of STM to the plasma membrane in cells in the peripheral shoot meristem region thus facilitating STM recycling to the nucleus to maintain stem cells. May function as a signaling molecule by regulating the trafficking of other regulators. In Arabidopsis thaliana (Mouse-ear cress), this protein is FT-interacting protein 3.